The primary structure comprises 283 residues: Malonyl-[acyl-carrier protein] O-methyltransferase (283 aa).

This sequence belongs to the methyltransferase superfamily.

It catalyses the reaction malonyl-[ACP] + S-adenosyl-L-methionine = malonyl-[ACP] methyl ester + S-adenosyl-L-homocysteine. It functions in the pathway cofactor biosynthesis; biotin biosynthesis. In terms of biological role, converts the free carboxyl group of a malonyl-thioester to its methyl ester by transfer of a methyl group from S-adenosyl-L-methionine (SAM). It allows to synthesize pimeloyl-ACP via the fatty acid synthetic pathway. The protein is Malonyl-[acyl-carrier protein] O-methyltransferase of Acetivibrio thermocellus (strain ATCC 27405 / DSM 1237 / JCM 9322 / NBRC 103400 / NCIMB 10682 / NRRL B-4536 / VPI 7372) (Clostridium thermocellum).